The primary structure comprises 747 residues: MAADARAEAQGLTTRILELRDAYYELDTVLVSDEEYDRMLRRLEELERLHPELQSQDSPTQTVGGRAQTTLFAPVEHAERMLSLDNVFSFEAFEAWAAKIERDAGRRVDYLCELKIDGLAINLRYENGVLVTAATRGDGVVGEDVTENIRHIPAITQRLSGAGPFPPVVEVRGEVFFPVAKFEELNANQQAAGERVFANARNAASGSLRQKAEGKNPAQRRLMRDRLGRLRMLVHGIGAWPNPPVATQSGVYELLRSWGLPTSAHGRVFGTVQEAADFIGRSAERRDTVEHEIDGVVIKVDELVLHDELGATSRAPRWAIAYKYPPEQVNTKLLDIVVSVGRTGRATPFAVMEKVKVAGSEVRQATLHNQDVVKAKGVLIGDTVVLRKAGDVIPEVLGPVVELRDGTEREFAMPTDCPECGTPLAPAKEGDIDLRCPNAEFCPAQVRGRVEHIGSRGGLDIEALGEVAAAALTQPRFPERAPLPTEAGLFGLRLEDLFPIEVVVRDSETGLPKLTETGVEKVDAPFRRRRQKKDGAFDPEAEAFDGDEIAVPSKSAIELLANLRAARTKPLWRILVSLNIRHVGPVAARALADHFGSLDAIRAASRDELAAVDGVGGIVADAVLSWFEIGWHCEIVENWARDGVQFAIPGHPGPGRADTGGGVLSGLTVVATGSLEGYTREAAQEAIVAAGGKAASSVSKKTDFVAAGPGAGSKLAKAEELGVRVLDAAQFTILVEQGPGALPEVAE.

Residues aspartate 33–aspartate 37, serine 83–leucine 84, and glutamate 113 each bind NAD(+). Catalysis depends on lysine 115, which acts as the N6-AMP-lysine intermediate. Arginine 136, glutamate 174, lysine 299, and lysine 323 together coordinate NAD(+). Zn(2+)-binding residues include cysteine 417, cysteine 420, cysteine 436, and cysteine 442. Positions threonine 659 to glutamate 747 constitute a BRCT domain.

The protein belongs to the NAD-dependent DNA ligase family. LigA subfamily. Mg(2+) serves as cofactor. It depends on Mn(2+) as a cofactor.

It catalyses the reaction NAD(+) + (deoxyribonucleotide)n-3'-hydroxyl + 5'-phospho-(deoxyribonucleotide)m = (deoxyribonucleotide)n+m + AMP + beta-nicotinamide D-nucleotide.. Functionally, DNA ligase that catalyzes the formation of phosphodiester linkages between 5'-phosphoryl and 3'-hydroxyl groups in double-stranded DNA using NAD as a coenzyme and as the energy source for the reaction. It is essential for DNA replication and repair of damaged DNA. This chain is DNA ligase, found in Leifsonia xyli subsp. xyli (strain CTCB07).